A 489-amino-acid chain; its full sequence is Glutamyl-tRNA(Gln) amidotransferase subunit A (489 aa).

Residues Lys77 and Ser157 each act as charge relay system in the active site. Residue Ser181 is the Acyl-ester intermediate of the active site.

This sequence belongs to the amidase family. GatA subfamily. As to quaternary structure, heterotrimer of A, B and C subunits.

It catalyses the reaction L-glutamyl-tRNA(Gln) + L-glutamine + ATP + H2O = L-glutaminyl-tRNA(Gln) + L-glutamate + ADP + phosphate + H(+). Functionally, allows the formation of correctly charged Gln-tRNA(Gln) through the transamidation of misacylated Glu-tRNA(Gln) in organisms which lack glutaminyl-tRNA synthetase. The reaction takes place in the presence of glutamine and ATP through an activated gamma-phospho-Glu-tRNA(Gln). This Caulobacter vibrioides (strain ATCC 19089 / CIP 103742 / CB 15) (Caulobacter crescentus) protein is Glutamyl-tRNA(Gln) amidotransferase subunit A.